Here is a 248-residue protein sequence, read N- to C-terminus: Probable transcriptional regulatory protein BH14810 (248 aa).

Belongs to the TACO1 family.

Its subcellular location is the cytoplasm. The polypeptide is Probable transcriptional regulatory protein BH14810 (Bartonella henselae (strain ATCC 49882 / DSM 28221 / CCUG 30454 / Houston 1) (Rochalimaea henselae)).